Here is a 525-residue protein sequence, read N- to C-terminus: MAGLQLAPHLPVGVMFPHNKTEAHGLHSAKHDPYEQSDSPQRSSMGHLRTSFQQKLWSNTELEQEDVISTHPKRNICTKARRHSCPHSAGISQQGSGNNAQGQGKGLFYLSSPTPRYPKANDQDFIPFRKKRVGVDRAYPLKPMVHRKSHSTSETGIDGDQNGYPRLPDSSEFSDSSFGLRSWVNPSLLASPQAEKVMAQLHRTEWTQIQRLEAAGESLQKEIRRKEILLREKLKKTEEGLRRIQREKKQAIFQEDRELQRMVLPRRRVRDGDLDTTHNSCLSPELRSEVFSRNRGEDQTCEQAQENSSPLQLSDYEIQRLKRERLMVSNNKIRDRDSGPSAGTFSQPAEDLGDELQASSLSGTPGSSGSSSSTEEQELGKCSHCGRSFLSLRLQRHSTVCGKMQGSKRKVFDSSRARAKGTELEQYLNWRGPATDKAEPPPRKSTWRQKHESFIRTLRHARQVQQVIARGGNPSDLPSILPAENPDYVQCPHCSRHFAPKVAERHIPKCKTIKNRPPPPRRHDS.

Positions 23–34 are enriched in basic and acidic residues; that stretch reads AHGLHSAKHDPY. Disordered stretches follow at residues 23 to 48, 85 to 107, and 145 to 171; these read AHGL…MGHL, CPHS…GKGL, and VHRK…PDSS. Positions 36 to 48 are enriched in polar residues; it reads QSDSPQRSSMGHL. The span at 90–102 shows a compositional bias: low complexity; it reads GISQQGSGNNAQG. The stretch at 207–252 forms a coiled coil; that stretch reads TQIQRLEAAGESLQKEIRRKEILLREKLKKTEEGLRRIQREKKQAI. Disordered stretches follow at residues 292-316, 330-349, and 356-379; these read SRNR…LSDY, NNKI…SQPA, and LQAS…EQEL. Residues 301–312 are compositionally biased toward polar residues; the sequence is CEQAQENSSPLQ. The segment covering 359–373 has biased composition (low complexity); it reads SSLSGTPGSSGSSSS. 2 consecutive C2HC/C3H-type zinc fingers follow at residues 378 to 407 and 487 to 516; these read ELGK…MQGS and DYVQ…IKNR. Cys-382, Cys-385, His-397, Cys-401, Cys-491, Cys-494, His-506, and Cys-510 together coordinate Zn(2+).

It belongs to the ZC2HC1 family. Zn(2+) is required as a cofactor.

The polypeptide is Zinc finger C2HC domain-containing protein 1C (Zc2hc1c) (Rattus norvegicus (Rat)).